Here is an 847-residue protein sequence, read N- to C-terminus: UPF0182 protein CYB_0372 (847 aa).

7 helical membrane-spanning segments follow: residues 7 to 27 (GLFL…LAAF), 51 to 71 (WGLG…NICS), 76 to 96 (ATLA…AGSL), 141 to 161 (FNLV…ELGL), 168 to 188 (LALS…LFLI), 220 to 240 (LPAT…FWAL), and 259 to 279 (WASS…FGLL).

The protein belongs to the UPF0182 family.

The protein resides in the cell membrane. This is UPF0182 protein CYB_0372 from Synechococcus sp. (strain JA-2-3B'a(2-13)) (Cyanobacteria bacterium Yellowstone B-Prime).